The following is a 205-amino-acid chain: uncharacterized protein (205 aa).

The signal sequence occupies residues 1–18; that stretch reads MKASLALLSLLTAFTSHS.

This is an uncharacterized protein from Escherichia coli (strain K12).